Reading from the N-terminus, the 95-residue chain is Cerebratulus toxin A-III (95 aa).

3 disulfides stabilise this stretch: C17/C38, C23/C34, and C48/C61.

Belongs to the worm cytolysin family.

It is found in the secreted. In terms of biological role, permeabilizes a variety of cells. Forms large pores which allows the release of large proteins almost as rapidly as small organic molecules and inorganic ions. At sublytic concentrations, the toxin also inhibits protein kinase C and endogenous voltage-gated cation selective (sodium, calcium) channels occurring in the nervous and cardiovascular systems. This is Cerebratulus toxin A-III from Cerebratulus lacteus (Milky ribbon worm).